Consider the following 256-residue polypeptide: Biosynthetic peptidoglycan transglycosylase (256 aa).

Residues 26–48 (VARWLAYAGGVFAGAWLATQLYY) traverse the membrane as a helical segment.

Belongs to the glycosyltransferase 51 family.

The protein localises to the cell inner membrane. The catalysed reaction is [GlcNAc-(1-&gt;4)-Mur2Ac(oyl-L-Ala-gamma-D-Glu-L-Lys-D-Ala-D-Ala)](n)-di-trans,octa-cis-undecaprenyl diphosphate + beta-D-GlcNAc-(1-&gt;4)-Mur2Ac(oyl-L-Ala-gamma-D-Glu-L-Lys-D-Ala-D-Ala)-di-trans,octa-cis-undecaprenyl diphosphate = [GlcNAc-(1-&gt;4)-Mur2Ac(oyl-L-Ala-gamma-D-Glu-L-Lys-D-Ala-D-Ala)](n+1)-di-trans,octa-cis-undecaprenyl diphosphate + di-trans,octa-cis-undecaprenyl diphosphate + H(+). It functions in the pathway cell wall biogenesis; peptidoglycan biosynthesis. Peptidoglycan polymerase that catalyzes glycan chain elongation from lipid-linked precursors. This chain is Biosynthetic peptidoglycan transglycosylase, found in Burkholderia thailandensis (strain ATCC 700388 / DSM 13276 / CCUG 48851 / CIP 106301 / E264).